The following is a 149-amino-acid chain: UPF0179 protein MA_3685 (149 aa).

Belongs to the UPF0179 family.

In Methanosarcina acetivorans (strain ATCC 35395 / DSM 2834 / JCM 12185 / C2A), this protein is UPF0179 protein MA_3685.